Here is a 193-residue protein sequence, read N- to C-terminus: Cuticle protein 18.7 (193 aa).

Functionally, component of the cuticle of migratory locust which contains more than 100 different structural proteins. The sequence is that of Cuticle protein 18.7 from Locusta migratoria (Migratory locust).